We begin with the raw amino-acid sequence, 449 residues long: 23S rRNA (uracil(1939)-C(5))-methyltransferase RlmD (449 aa).

One can recognise a TRAM domain in the interval 1–66; that stretch reads MGRSRHHNKL…AKFDEAKVVE (66 aa). Positions 79, 85, 88, and 169 each coordinate [4Fe-4S] cluster. Residues Gln-280, Phe-309, Asn-314, Glu-330, Asn-357, and Asp-379 each contribute to the S-adenosyl-L-methionine site. Cys-405 acts as the Nucleophile in catalysis.

It belongs to the class I-like SAM-binding methyltransferase superfamily. RNA M5U methyltransferase family. RlmD subfamily.

It catalyses the reaction uridine(1939) in 23S rRNA + S-adenosyl-L-methionine = 5-methyluridine(1939) in 23S rRNA + S-adenosyl-L-homocysteine + H(+). Catalyzes the formation of 5-methyl-uridine at position 1939 (m5U1939) in 23S rRNA. The sequence is that of 23S rRNA (uracil(1939)-C(5))-methyltransferase RlmD from Francisella tularensis subsp. tularensis (strain FSC 198).